Consider the following 155-residue polypeptide: Ribosomal RNA large subunit methyltransferase H (155 aa).

Residues L72, G103, and 122–127 (LSTLTL) each bind S-adenosyl-L-methionine.

It belongs to the RNA methyltransferase RlmH family. Homodimer.

The protein resides in the cytoplasm. It carries out the reaction pseudouridine(1915) in 23S rRNA + S-adenosyl-L-methionine = N(3)-methylpseudouridine(1915) in 23S rRNA + S-adenosyl-L-homocysteine + H(+). Specifically methylates the pseudouridine at position 1915 (m3Psi1915) in 23S rRNA. The chain is Ribosomal RNA large subunit methyltransferase H from Klebsiella pneumoniae (strain 342).